The primary structure comprises 296 residues: Probable cell wall protein PGA41 (296 aa).

The signal sequence occupies residues 1-18 (MKFTIVLFTLISVTVAAA). Positions 146–212 (IASSTKESSS…ITTISSDSST (67 aa)) are enriched in low complexity. The tract at residues 146–276 (IASSTKESSS…PNSSQTAPGA (131 aa)) is disordered. Residues 220-245 (QGGGGNSGNNGSNGDGGNDASGGGGV) show a composition bias toward gly residues. Residues N229 and N268 are each glycosylated (N-linked (GlcNAc...) asparagine). The segment covering 247–274 (NENEQASSPPSSQSSTNSNQPNSSQTAP) has biased composition (low complexity). G275 is lipidated: GPI-anchor amidated glycine. Residues 276–296 (AANYLSSVSVGTLMILVLGLI) constitute a propeptide, removed in mature form.

Belongs to the IHD1 family. In terms of processing, the GPI-anchor is attached to the protein in the endoplasmic reticulum and serves to target the protein to the cell surface. There, the glucosamine-inositol phospholipid moiety is cleaved off and the GPI-modified mannoprotein is covalently attached via its lipidless GPI glycan remnant to the 1,6-beta-glucan of the outer cell wall layer.

The protein localises to the secreted. It is found in the cell wall. It localises to the membrane. Functionally, probable GPI-anchored cell wall protein that may be involved in cell wall organization, hyphal growth, as well as in virulence. In Candida albicans (strain SC5314 / ATCC MYA-2876) (Yeast), this protein is Probable cell wall protein PGA41 (PGA41).